The sequence spans 1068 residues: TSC22 domain family protein 1 (1068 aa).

Residues 1–98 (MHQPPESTAA…SQAQLQAQPL (98 aa)) are required for interaction with TGFBR1 and promotion of TGF-beta signaling. Disordered regions lie at residues 23-110 (AHPA…KKSG), 125-288 (ISSN…SPAS), and 602-623 (YSQA…QQLQ). Over residues 36–55 (GSASALNAAGTGVGSSATSS) the composition is skewed to low complexity. Pro residues predominate over residues 58–70 (FPPPSLLQPPPPA). A compositionally biased stretch (low complexity) spans 84–100 (SLNLLSQAQLQAQPLAP). A compositionally biased stretch (acidic residues) spans 133-142 (EDTESYDDLD). A compositionally biased stretch (basic residues) spans 216 to 240 (HPHHLHHHHHIHHGHHLQHGHHHPS). The span at 241–250 (HVAVASASIP) shows a compositional bias: low complexity. Residues 261 to 271 (KLSTTGSSDSI) show a composition bias toward polar residues. At serine 263 the chain carries Phosphoserine. Positions 272-288 (TPVAPTSAVSSSGSPAS) are enriched in low complexity. A compositionally biased stretch (pro residues) spans 609–620 (VQTPLPGAPPPQ). The tract at residues 1000-1021 (VLKEQIKELIEKNSQLEQENNL) is leucine-zipper. The tract at residues 1032 to 1068 (AQFQAQLQTGSPPATTQPQGTTQPPAQPASQGSGPTA) is disordered. Low complexity predominate over residues 1039-1068 (QTGSPPATTQPQGTTQPPAQPASQGSGPTA).

It belongs to the TSC-22/Dip/Bun family. In terms of assembly, forms homodimers. Forms heterodimers. Component of a complex composed of TSC22D1 (via N-terminus), TGFBR1 and TGFBR2; the interaction between TSC22D1 and TGFBR1 is inhibited by SMAD7 and promoted by TGFB1. Interacts with SMAD7; the interaction requires TGF-beta and the interaction is inhibited by TGFBR1. Interacts with TPT1/fortilin; interaction results in the destabilization of TSC22D1 protein and prevents TSC22D1-mediated apoptosis. Interacts with SMAD4 (via N-terminus). Interacts with ACVRL1/ALK1, ACVR1/ALK2, BMPR1A/ALK3, ACVR1B/ALK4, BMPR1B/ALK6, ACVR2A/ACTRII, and BMPR2. Interacts with SMAD6. Interacts with TFE3; the interaction is enhanced in the presence of TGF-beta. As to quaternary structure, forms a heterodimer with TSC22D4/THG1. Forms a heterodimer with TSC22D4/THG1. Interacts with histone H1-2. Interacts with GNL3.

Its subcellular location is the cytoplasm. The protein resides in the nucleus. It is found in the cell membrane. It localises to the mitochondrion. Transcriptional repressor. Acts on the C-type natriuretic peptide (CNP) promoter. Acts to promote CASP3-mediated apoptosis. Positively regulates TGF-beta signaling by interacting with SMAD7 which inhibits binding of SMAD7 to TGFBR1, preventing recruitment of SMURF ubiquitin ligases to TGFBR1 and inhibiting SMURF-mediated ubiquitination and degradation of TGFBR1. Contributes to enhancement of TGF-beta signaling by binding to and modulating the transcription activator activity of SMAD4. Promotes TGF-beta-induced transcription of COL1A2; via its interaction with TFE3 at E-boxes in the gene proximal promoter. Plays a role in the repression of hematopoietic precursor cell growth. Promotes IL2 deprivation-induced apoptosis in T-lymphocytes, via repression of TSC22D3/GILZ transcription and activation of the caspase cascade. Functionally, may act to negatively regulate TGFB3 signaling and thereby inhibit cell death in mammary gland cells. Its function is as follows. Positively regulates cell death in response to TGFB3 during mammary gland involution. This chain is TSC22 domain family protein 1, found in Macaca fascicularis (Crab-eating macaque).